Reading from the N-terminus, the 310-residue chain is Dopamine receptor-interacting protein 1 (310 aa).

In terms of assembly, interacts with DRD1.

Functionally, could be a regulator of the dopamine receptor signaling pathway. This is Dopamine receptor-interacting protein 1 from Homo sapiens (Human).